A 274-amino-acid chain; its full sequence is Acyl-[acyl-carrier-protein]--UDP-N-acetylglucosamine O-acyltransferase (274 aa).

This sequence belongs to the transferase hexapeptide repeat family. LpxA subfamily. Homotrimer.

The protein localises to the cytoplasm. It carries out the reaction a (3R)-hydroxyacyl-[ACP] + UDP-N-acetyl-alpha-D-glucosamine = a UDP-3-O-[(3R)-3-hydroxyacyl]-N-acetyl-alpha-D-glucosamine + holo-[ACP]. It functions in the pathway glycolipid biosynthesis; lipid IV(A) biosynthesis; lipid IV(A) from (3R)-3-hydroxytetradecanoyl-[acyl-carrier-protein] and UDP-N-acetyl-alpha-D-glucosamine: step 1/6. Functionally, involved in the biosynthesis of lipid A, a phosphorylated glycolipid that anchors the lipopolysaccharide to the outer membrane of the cell. This chain is Acyl-[acyl-carrier-protein]--UDP-N-acetylglucosamine O-acyltransferase, found in Bartonella bacilliformis (strain ATCC 35685 / KC583 / Herrer 020/F12,63).